We begin with the raw amino-acid sequence, 463 residues long: Exodeoxyribonuclease 7 large subunit (463 aa).

This sequence belongs to the XseA family. As to quaternary structure, heterooligomer composed of large and small subunits.

It is found in the cytoplasm. It catalyses the reaction Exonucleolytic cleavage in either 5'- to 3'- or 3'- to 5'-direction to yield nucleoside 5'-phosphates.. Functionally, bidirectionally degrades single-stranded DNA into large acid-insoluble oligonucleotides, which are then degraded further into small acid-soluble oligonucleotides. The protein is Exodeoxyribonuclease 7 large subunit of Klebsiella pneumoniae subsp. pneumoniae (strain ATCC 700721 / MGH 78578).